The following is a 560-amino-acid chain: NAD-dependent malic enzyme (560 aa).

Catalysis depends on Tyr-100, which acts as the Proton donor. Arg-153 is an NAD(+) binding site. Lys-171 functions as the Proton acceptor in the catalytic mechanism. Residues Glu-242, Asp-243, and Asp-266 each contribute to the a divalent metal cation site. NAD(+)-binding residues include Asp-266 and Asn-413.

Belongs to the malic enzymes family. Homotetramer. Requires Mg(2+) as cofactor. Mn(2+) serves as cofactor.

It carries out the reaction (S)-malate + NAD(+) = pyruvate + CO2 + NADH. It catalyses the reaction oxaloacetate + H(+) = pyruvate + CO2. The polypeptide is NAD-dependent malic enzyme (Psychrobacter arcticus (strain DSM 17307 / VKM B-2377 / 273-4)).